We begin with the raw amino-acid sequence, 236 residues long: Small ribosomal subunit protein uS5 (236 aa).

The region spanning 61-124 (ENQEIIDIAL…NYAKLNIIEI (64 aa)) is the S5 DRBM domain.

It belongs to the universal ribosomal protein uS5 family. In terms of assembly, part of the 30S ribosomal subunit. Contacts protein S4.

Functionally, with S4 and S12 plays an important role in translational accuracy. The chain is Small ribosomal subunit protein uS5 from Pyrococcus horikoshii (strain ATCC 700860 / DSM 12428 / JCM 9974 / NBRC 100139 / OT-3).